A 446-amino-acid polypeptide reads, in one-letter code: Argininosuccinate synthase (446 aa).

ATP contacts are provided by residues 17–25 (AFSGGLDTS) and alanine 43. Tyrosine 99 provides a ligand contact to L-citrulline. Glycine 129 and threonine 131 together coordinate ATP. Residues threonine 131, asparagine 135, and aspartate 136 each contribute to the L-aspartate site. Residue asparagine 135 participates in L-citrulline binding. ATP is bound at residue aspartate 136. Residues arginine 139 and serine 192 each contribute to the L-citrulline site. An ATP-binding site is contributed by aspartate 194. L-citrulline is bound by residues threonine 201, glutamate 203, and glutamate 280.

This sequence belongs to the argininosuccinate synthase family. Type 2 subfamily. In terms of assembly, homotetramer.

The protein resides in the cytoplasm. It carries out the reaction L-citrulline + L-aspartate + ATP = 2-(N(omega)-L-arginino)succinate + AMP + diphosphate + H(+). It participates in amino-acid biosynthesis; L-arginine biosynthesis; L-arginine from L-ornithine and carbamoyl phosphate: step 2/3. This is Argininosuccinate synthase from Polaromonas sp. (strain JS666 / ATCC BAA-500).